The following is a 333-amino-acid chain: NADH-quinone oxidoreductase subunit H (333 aa).

The next 8 membrane-spanning stretches (helical) occupy residues 15–35 (FFIF…FVTY), 88–108 (FILA…VIPF), 117–137 (IGVG…GVVT), 159–179 (ISYE…AGSL), 191–211 (VWYI…AVAE), 239–259 (WAFF…LITV), 274–296 (IPGA…WFRV), and 313–333 (VLLP…ELFF).

Belongs to the complex I subunit 1 family. As to quaternary structure, NDH-1 is composed of 14 different subunits. Subunits NuoA, H, J, K, L, M, N constitute the membrane sector of the complex.

The protein localises to the cell membrane. It catalyses the reaction a quinone + NADH + 5 H(+)(in) = a quinol + NAD(+) + 4 H(+)(out). In terms of biological role, NDH-1 shuttles electrons from NADH, via FMN and iron-sulfur (Fe-S) centers, to quinones in the respiratory chain. The immediate electron acceptor for the enzyme in this species is believed to be ubiquinone. Couples the redox reaction to proton translocation (for every two electrons transferred, four hydrogen ions are translocated across the cytoplasmic membrane), and thus conserves the redox energy in a proton gradient. This subunit may bind ubiquinone. The polypeptide is NADH-quinone oxidoreductase subunit H (Bacillus cereus (strain G9842)).